We begin with the raw amino-acid sequence, 167 residues long: Large ribosomal subunit protein uL22 (167 aa).

The interval 120–167 is disordered; the sequence is GSTATTVEDEAPKAKGAKGAKAKKAPAKKAAAKKAPAKKFAGKKTAKR. The segment covering 134 to 167 has biased composition (basic residues); that stretch reads KGAKGAKAKKAPAKKAAAKKAPAKKFAGKKTAKR.

Belongs to the universal ribosomal protein uL22 family. Part of the 50S ribosomal subunit.

In terms of biological role, this protein binds specifically to 23S rRNA; its binding is stimulated by other ribosomal proteins, e.g. L4, L17, and L20. It is important during the early stages of 50S assembly. It makes multiple contacts with different domains of the 23S rRNA in the assembled 50S subunit and ribosome. The globular domain of the protein is located near the polypeptide exit tunnel on the outside of the subunit, while an extended beta-hairpin is found that lines the wall of the exit tunnel in the center of the 70S ribosome. This is Large ribosomal subunit protein uL22 from Koribacter versatilis (strain Ellin345).